Consider the following 264-residue polypeptide: Triosephosphate isomerase (264 aa).

A substrate-binding site is contributed by 13 to 15 (NWK). His106 (electrophile) is an active-site residue. Glu179 (proton acceptor) is an active-site residue. Residues Gly185, Ser223, and 244–245 (GG) each bind substrate.

It belongs to the triosephosphate isomerase family. Homodimer.

It localises to the cytoplasm. The enzyme catalyses D-glyceraldehyde 3-phosphate = dihydroxyacetone phosphate. The protein operates within carbohydrate biosynthesis; gluconeogenesis. It participates in carbohydrate degradation; glycolysis; D-glyceraldehyde 3-phosphate from glycerone phosphate: step 1/1. In terms of biological role, involved in the gluconeogenesis. Catalyzes stereospecifically the conversion of dihydroxyacetone phosphate (DHAP) to D-glyceraldehyde-3-phosphate (G3P). This chain is Triosephosphate isomerase, found in Acinetobacter baumannii (strain AB0057).